A 428-amino-acid chain; its full sequence is Adenylosuccinate synthetase (428 aa).

GTP is bound by residues 12–18 (GDEGKGK) and 40–42 (GHS). Aspartate 13 functions as the Proton acceptor in the catalytic mechanism. 2 residues coordinate Mg(2+): aspartate 13 and glycine 40. IMP contacts are provided by residues 13 to 16 (DEGK), 38 to 41 (NAGH), threonine 128, arginine 142, glutamine 223, threonine 238, and arginine 302. Residue histidine 41 is the Proton donor of the active site. 298–304 (VTTGRPR) lines the substrate pocket. GTP is bound by residues arginine 304, 330–332 (KLD), and 412–414 (GTG).

Belongs to the adenylosuccinate synthetase family. Homodimer. It depends on Mg(2+) as a cofactor.

Its subcellular location is the cytoplasm. The catalysed reaction is IMP + L-aspartate + GTP = N(6)-(1,2-dicarboxyethyl)-AMP + GDP + phosphate + 2 H(+). It functions in the pathway purine metabolism; AMP biosynthesis via de novo pathway; AMP from IMP: step 1/2. In terms of biological role, plays an important role in the de novo pathway of purine nucleotide biosynthesis. Catalyzes the first committed step in the biosynthesis of AMP from IMP. The protein is Adenylosuccinate synthetase of Bifidobacterium longum subsp. infantis (strain ATCC 15697 / DSM 20088 / JCM 1222 / NCTC 11817 / S12).